We begin with the raw amino-acid sequence, 550 residues long: Dipeptide-binding protein (550 aa).

Positions 1–22 (MKQAKIIGLSTVIALSGIILVA) are cleaved as a signal peptide. A lipid anchor (N-palmitoyl cysteine) is attached at C23. C23 carries the S-diacylglycerol cysteine lipid modification.

This sequence belongs to the bacterial solute-binding protein 5 family. As to quaternary structure, the complex is composed of two ATP-binding proteins (DppD and DppF), two transmembrane proteins (DppB and DppC) and a solute-binding protein (DppA).

Its subcellular location is the cell membrane. Its function is as follows. Part of the ABC transporter DppABCDF involved in dipeptide transport. Binds di- and tripeptides with high affinity. Requires a free N-terminal alpha-amino group and an alpha-peptide bound contiguous with the N-terminal amino group, has a strong selectivity for L-residues, and shows preference for dipeptides containing methionine or arginine, followed by hydrophobic tripeptides consisting of leucine or valine residues. This chain is Dipeptide-binding protein, found in Lactococcus lactis subsp. cremoris (strain MG1363).